The sequence spans 133 residues: MRITQGTFSFLPDLTAAQVKAQIQYALDQNWAVSVEYTDDPHPRNTYWEMWGLPMFDLRDAAGVYGEVEACRTAHPGKYVRVNAFDSNRGWETVRLSFIVQRPEKEDGFRLDRTEGPGRTQRYALQHRSYAAG.

The protein belongs to the RuBisCO small chain family. As to quaternary structure, heterohexadecamer of 8 large and 8 small subunits.

In terms of biological role, ruBisCO catalyzes two reactions: the carboxylation of D-ribulose 1,5-bisphosphate, the primary event in carbon dioxide fixation, as well as the oxidative fragmentation of the pentose substrate. Both reactions occur simultaneously and in competition at the same active site. Although the small subunit is not catalytic it is essential for maximal activity. The sequence is that of Ribulose bisphosphate carboxylase small subunit from Xanthobacter flavus.